Consider the following 197-residue polypeptide: uncharacterized protein (197 aa).

The N-terminal stretch at 1 to 23 is a signal peptide; it reads MSARAPKELRLALPPCLLNRTFA. Residues N19 and N26 are each glycosylated (N-linked (GlcNAc...) asparagine). Over 24–61 the chain is Extracellular; it reads SPNASGSGNTGARGPGAGGSGTCITQVGQQLFQSFSST. Residues 62 to 82 traverse the membrane as a helical segment; that stretch reads LVLIVLVTLIFCLIVLSLSTF. Residues 83-197 lie on the Cytoplasmic side of the membrane; that stretch reads HIHKRRMKKR…EGLLQTVVLS (115 aa). A disordered region spans residues 94–179; it reads MQRAQEEYER…ASSPQGAHAV (86 aa). Composition is skewed to basic and acidic residues over residues 96–107 and 125–136; these read RAQEEYERDHCS and HAKETRLERQPR. A compositionally biased stretch (low complexity) spans 147–161; that stretch reads SSSSSSSPGLPCQGP. A compositionally biased stretch (pro residues) spans 162–171; that stretch reads CAPPPPPPAS.

Its subcellular location is the membrane. This is an uncharacterized protein from Pongo abelii (Sumatran orangutan).